The sequence spans 329 residues: Nicotianamine synthase 8 (329 aa).

It belongs to the nicotianamine synthase (NAS)-like family. Homotrimer.

The catalysed reaction is 3 S-adenosyl-L-methionine = nicotianamine + 3 S-methyl-5'-thioadenosine + 3 H(+). Its function is as follows. Synthesizes nicotianamine, a polyamine that is the first intermediate in the synthesis of the phytosiderophores of the mugineic acid type found in gramineae which serve as a sensor for the physiological iron status within the plant, and/or might be involved in the transport of iron. This Hordeum vulgare (Barley) protein is Nicotianamine synthase 8 (NAS8).